The primary structure comprises 368 residues: Alanine racemase (368 aa).

Lys-40 (proton acceptor; specific for D-alanine) is an active-site residue. The residue at position 40 (Lys-40) is an N6-(pyridoxal phosphate)lysine. Arg-134 is a substrate binding site. Tyr-263 (proton acceptor; specific for L-alanine) is an active-site residue. Residue Met-310 coordinates substrate.

This sequence belongs to the alanine racemase family. It depends on pyridoxal 5'-phosphate as a cofactor.

It catalyses the reaction L-alanine = D-alanine. The protein operates within amino-acid biosynthesis; D-alanine biosynthesis; D-alanine from L-alanine: step 1/1. In terms of biological role, catalyzes the interconversion of L-alanine and D-alanine. May also act on other amino acids. This Listeria monocytogenes serotype 4b (strain F2365) protein is Alanine racemase (alr).